The primary structure comprises 644 residues: Kelch-like protein 34 (644 aa).

The BTB domain occupies Cys29–Met96. The region spanning Cys131–Ser238 is the BACK domain. The segment at Ala304 to Glu329 is disordered. Acidic residues predominate over residues Glu313 to Glu329. 6 Kelch repeats span residues Glu320–Asn366, Phe367–Glu425, Arg426–Arg473, Val475–Gly526, Val528–Glu571, and Ala573–Leu623.

The polypeptide is Kelch-like protein 34 (KLHL34) (Homo sapiens (Human)).